The primary structure comprises 718 residues: Acetolactate synthase, mitochondrial (718 aa).

2 disordered regions span residues 1-53 (MLTR…YDTP) and 75-99 (QSSASTAAASPAVRPQPAQHFQAAP). Over residues 32–45 (RYSNNIHTSSTQNA) the composition is skewed to polar residues. A compositionally biased stretch (low complexity) spans 76–99 (SSASTAAASPAVRPQPAQHFQAAP). Position 173 (E173) interacts with thiamine diphosphate. R275 contributes to the FAD binding site. The disordered stretch occupies residues 301-326 (VQPGHSPYLPSNPLNPSSQPSDPLPG). Residues 306-325 (SPYLPSNPLNPSSQPSDPLP) are compositionally biased toward low complexity. FAD-binding positions include 397-418 (HGSAYANFAMQEADVLIALGVR) and 449-468 (EIQPKNINKIVEAQIPVLGD). A thiamine pyrophosphate binding region spans residues 541–621 (QHQMWACQYY…VKVLLFNNEF (81 aa)). 2 residues coordinate Mg(2+): D592 and N619.

This sequence belongs to the TPP enzyme family. Requires Mg(2+) as cofactor. It depends on thiamine diphosphate as a cofactor.

It localises to the mitochondrion. The enzyme catalyses 2 pyruvate + H(+) = (2S)-2-acetolactate + CO2. The protein operates within amino-acid biosynthesis; L-isoleucine biosynthesis; L-isoleucine from 2-oxobutanoate: step 1/4. It participates in amino-acid biosynthesis; L-valine biosynthesis; L-valine from pyruvate: step 1/4. The sequence is that of Acetolactate synthase, mitochondrial (ILV2) from Cryptococcus neoformans var. grubii serotype A (strain H99 / ATCC 208821 / CBS 10515 / FGSC 9487) (Filobasidiella neoformans var. grubii).